The sequence spans 333 residues: Transcription factor MYB36 (333 aa).

HTH myb-type domains lie at 9–62 (KANV…LNYL) and 63–117 (RPNI…KKKL). 2 DNA-binding regions (H-T-H motif) span residues 38 to 62 (WIAL…LNYL) and 90 to 113 (WSII…NTKL). The interval 119–150 (GRQKQMNRQDSITDSTENNLSNNNNNKSPQNL) is disordered. Residues 122 to 135 (KQMNRQDSITDSTE) are compositionally biased toward polar residues. The segment covering 136–150 (NNLSNNNNNKSPQNL) has biased composition (low complexity).

As to expression, expressed in leaves, roots (endodermis-specific) and seedlings.

It localises to the nucleus. Functionally, transcription factors that activates genes required for endodermal differentiation but represses genes involved in proliferative divisions, thus regulating the transition from proliferation to differentiation in root endodermis. Required for Casparian strip formation by positively regulating the expression of the Casparian strip genes CASP1, PER64 and ESB1 and other endodermis-specific genes, thus triggering correct localized lignin biosynthesis in root endodermis and subsequently regulating global ion homeostasis. The polypeptide is Transcription factor MYB36 (Arabidopsis thaliana (Mouse-ear cress)).